The following is a 721-amino-acid chain: Protein mu-NS (721 aa).

The segment at 1–13 is interaction with sigma-NS; sequence MASFKGFSANTVP. Residues 1-38 are RNA-binding; that stretch reads MASFKGFSANTVPVSKTRKDTSSLTATPGLRAPSMSSP. The interaction with mu-2 stretch occupies residues 14-40; sequence VSKTRKDTSSLTATPGLRAPSMSSPVD. Positions 17 to 37 are disordered; that stretch reads TRKDTSSLTATPGLRAPSMSS. The segment at 471 to 721 is involved in the formation of factory-like inclusions; that stretch reads QSDTVDGIKL…IDFSVPADEL (251 aa). 2 coiled-coil regions span residues 523 to 556 and 632 to 686; these read LLSQ…ADVK and KQAH…NQRQ.

This sequence belongs to the orthoreovirus mu-NS protein family. Interacts with mu-2. Interacts with sigma-NS; in viral factories. Interacts with the inner capsid proteins lambda-1 and sigma-2, and outer capsid protein lambda-2; in viral factories. Post-translationally, the N-terminus is blocked.

It localises to the host cytoplasm. In terms of biological role, non-structural protein implicated with protein sigma-NS in forming the matrix of viral factories, which are large inclusions in the host cytoplasm where replication intermediates are assembled and viral RNA replication takes place. Together with mu-2, recruits the other core proteins to these factories. In Mammalia (T2J), this protein is Protein mu-NS (M3).